The chain runs to 79 residues: Reactive oxygen species modulator 1 (79 aa).

Residues 23-43 (FMMGFAVGMAAGALFGTFSCL) traverse the membrane as a helical segment. The tract at residues 42 to 60 (CLRFGMRGRELMGGVGKTM) is sufficient for antibacterial activity.

It belongs to the MGR2 family.

It localises to the mitochondrion inner membrane. Functionally, has antibacterial activity against a variety of bacteria including S.aureus, P.aeruginosa and M.tuberculosis. Acts by inducing bacterial membrane breakage. In terms of biological role, induces production of reactive oxygen species (ROS) which are necessary for cell proliferation. May play a role in inducing oxidative DNA damage and replicative senescence. May play a role in the coordination of mitochondrial morphology and cell proliferation. The chain is Reactive oxygen species modulator 1 (romo1) from Xenopus tropicalis (Western clawed frog).